Consider the following 378-residue polypeptide: Chorismate synthase (378 aa).

Arginine 49 is a binding site for NADP(+). FMN is bound by residues 126 to 128 (RAS), glycine 287, 302 to 306 (KPTAT), and arginine 328.

The protein belongs to the chorismate synthase family. Homotetramer. It depends on FMNH2 as a cofactor.

The enzyme catalyses 5-O-(1-carboxyvinyl)-3-phosphoshikimate = chorismate + phosphate. Its pathway is metabolic intermediate biosynthesis; chorismate biosynthesis; chorismate from D-erythrose 4-phosphate and phosphoenolpyruvate: step 7/7. Functionally, catalyzes the anti-1,4-elimination of the C-3 phosphate and the C-6 proR hydrogen from 5-enolpyruvylshikimate-3-phosphate (EPSP) to yield chorismate, which is the branch point compound that serves as the starting substrate for the three terminal pathways of aromatic amino acid biosynthesis. This reaction introduces a second double bond into the aromatic ring system. This is Chorismate synthase from Synechococcus sp. (strain JA-3-3Ab) (Cyanobacteria bacterium Yellowstone A-Prime).